We begin with the raw amino-acid sequence, 74 residues long: MSKFILLVCILLLTTNIVSAASKCGRHGDSCVSSSDCCPGTWCHTYANRCQVRITEEELMKQREKILGRKGKDY.

The signal sequence occupies residues 1–20 (MSKFILLVCILLLTTNIVSA). 3 cysteine pairs are disulfide-bonded: Cys24–Cys38, Cys31–Cys43, and Cys37–Cys50.

As to expression, highly expressed in brain. Is also found in hemolymph.

Its function is as follows. The impact of this protein on the neuronal activity of the honeybee brain is not known. It does not affect apparent movement or hatching of blowfly larvae. However, when injected into fish, it induces a strong reversible paralytic effect. In addition, the presence of this small peptide in the hemolymph of adult drones together with its induction after bacterial infection suggests that this peptide exhibits antibacterial activity. This peptide may act by inhibiting ion channels. This is Omega-conotoxin-like protein 1 from Apis mellifera (Honeybee).